Reading from the N-terminus, the 431-residue chain is Tol-Pal system protein TolB (431 aa).

A signal peptide spans 1–26; that stretch reads MSLMTKLGFRALVASCLITAGSAANA. A disordered region spans residues 406–431; it reads DGSAPPQILSVQGGSVREPSWGPFMQ.

The protein belongs to the TolB family. In terms of assembly, the Tol-Pal system is composed of five core proteins: the inner membrane proteins TolA, TolQ and TolR, the periplasmic protein TolB and the outer membrane protein Pal. They form a network linking the inner and outer membranes and the peptidoglycan layer.

The protein localises to the periplasm. Functionally, part of the Tol-Pal system, which plays a role in outer membrane invagination during cell division and is important for maintaining outer membrane integrity. The protein is Tol-Pal system protein TolB of Burkholderia cenocepacia (strain HI2424).